The sequence spans 474 residues: tRNA-2-methylthio-N(6)-dimethylallyladenosine synthase (474 aa).

Residues 3 to 120 (KKLHIKTWGC…LPEMINSVRG (118 aa)) form the MTTase N-terminal domain. Positions 12, 49, 83, 157, 161, and 164 each coordinate [4Fe-4S] cluster. Positions 143–375 (RAEGPTAFVS…QERINQQAMA (233 aa)) constitute a Radical SAM core domain. One can recognise a TRAM domain in the interval 378–441 (RRMLGTTQRI…PNSLRGKVVR (64 aa)).

It belongs to the methylthiotransferase family. MiaB subfamily. In terms of assembly, monomer. [4Fe-4S] cluster serves as cofactor.

It localises to the cytoplasm. It carries out the reaction N(6)-dimethylallyladenosine(37) in tRNA + (sulfur carrier)-SH + AH2 + 2 S-adenosyl-L-methionine = 2-methylsulfanyl-N(6)-dimethylallyladenosine(37) in tRNA + (sulfur carrier)-H + 5'-deoxyadenosine + L-methionine + A + S-adenosyl-L-homocysteine + 2 H(+). Functionally, catalyzes the methylthiolation of N6-(dimethylallyl)adenosine (i(6)A), leading to the formation of 2-methylthio-N6-(dimethylallyl)adenosine (ms(2)i(6)A) at position 37 in tRNAs that read codons beginning with uridine. The polypeptide is tRNA-2-methylthio-N(6)-dimethylallyladenosine synthase (Escherichia coli O81 (strain ED1a)).